Consider the following 396-residue polypeptide: Elongation factor Tu (396 aa).

The region spanning 10 to 206 (KPHCNIGTIG…NVDEYIPQPE (197 aa)) is the tr-type G domain. A G1 region spans residues 19-26 (GHVDHGKT). GTP is bound at residue 19-26 (GHVDHGKT). Thr-26 is a binding site for Mg(2+). The segment at 60–64 (GITIS) is G2. The segment at 81 to 84 (DCPG) is G3. Residues 81 to 85 (DCPGH) and 136 to 139 (NKCD) each bind GTP. The tract at residues 136-139 (NKCD) is G4. A G5 region spans residues 174–176 (SAL).

The protein belongs to the TRAFAC class translation factor GTPase superfamily. Classic translation factor GTPase family. EF-Tu/EF-1A subfamily. In terms of assembly, monomer.

The protein localises to the cytoplasm. It carries out the reaction GTP + H2O = GDP + phosphate + H(+). Functionally, GTP hydrolase that promotes the GTP-dependent binding of aminoacyl-tRNA to the A-site of ribosomes during protein biosynthesis. The chain is Elongation factor Tu from Afipia carboxidovorans (strain ATCC 49405 / DSM 1227 / KCTC 32145 / OM5) (Oligotropha carboxidovorans).